Consider the following 346-residue polypeptide: MKFAILFGGNSYEHEISIVSAVALKKVINQNLEFIFCDEERRFYHIPSEKMNSKTFSTKAYKKEKELFIQQGGFFSKGFLKENKLECECVINLIHGGDGEDGKIAALFEFYSIKFIGPRLEASVLSFNKELTKLYAKSVGVKTLDYTMLRKGQNSKEKLRFPCIIKPARLGSSIGISIVKDEKDLEYAKDVGFEFDNDLVVEEFKNNIKEYNLAGCVINDKFVFSIIEEPKKKEFLDFEQKYLSFSGHNELIEANLSEELKEKLKDSFKKIYNPLFKGALIRCDFFILDNEVYLNEINPNPGSLANYLFKDFSTTLNTLADQIPLEKMIKINYNFLHSINGQKGKL.

An ATP-grasp domain is found at 133–327 (KLYAKSVGVK…TLADQIPLEK (195 aa)). 159 to 211 (LRFPCIIKPARLGSSIGISIVKDEKDLEYAKDVGFEFDNDLVVEEFKNNIKEY) serves as a coordination point for ATP. Mg(2+)-binding residues include D284, E296, and N298.

This sequence belongs to the D-alanine--D-alanine ligase family. Requires Mg(2+) as cofactor. Mn(2+) serves as cofactor.

It localises to the cytoplasm. The catalysed reaction is 2 D-alanine + ATP = D-alanyl-D-alanine + ADP + phosphate + H(+). The protein operates within cell wall biogenesis; peptidoglycan biosynthesis. In terms of biological role, cell wall formation. This Campylobacter jejuni subsp. doylei (strain ATCC BAA-1458 / RM4099 / 269.97) protein is D-alanine--D-alanine ligase.